The chain runs to 103 residues: Large ribosomal subunit protein bL21 (103 aa).

Belongs to the bacterial ribosomal protein bL21 family. Part of the 50S ribosomal subunit. Contacts protein L20.

In terms of biological role, this protein binds to 23S rRNA in the presence of protein L20. The sequence is that of Large ribosomal subunit protein bL21 from Ralstonia pickettii (strain 12J).